Reading from the N-terminus, the 82-residue chain is Protein transport protein SBH1 (82 aa).

The interval 1 to 36 is disordered; sequence MSSPTPPGGQRTLQKRKQGSSQKVAASAPKKNTNSN. Residues 1–53 are Cytoplasmic-facing; it reads MSSPTPPGGQRTLQKRKQGSSQKVAASAPKKNTNSNNSILKIYSDEATGLRVD. Residues 19-36 show a composition bias toward polar residues; the sequence is GSSQKVAASAPKKNTNSN. A helical membrane pass occupies residues 54–74; it reads PLVVLFLAVGFIFSVVALHVI.

The protein belongs to the SEC61-beta family. Component of the heterotrimeric Sec61 complex, which is composed of SSH1, SBH1 and SSS1. Presumably three to four Sec61 heterotrimers assemble into an oligomeric ring with a central aqueous pore. In cotranslational ER import, the pore diameter varies from 9-15 A in a ribosome-free resting state to 40-60 A in a functional state when associated with the ribosome. The Sec61 complex is part of a channel-forming translocon complex whose composition seem to change dependent upon different functional states. During post-translational ER import the Sec61 complex associates with the Sec62/63 complex to form the Sec complex. SBH1 interacts OST2, OST4 and WBP1 components of the OT complex.

The protein localises to the endoplasmic reticulum membrane. Part of the Sec61 complex, which is the major component of a channel-forming translocon complex that mediates protein translocation across the endoplasmic reticulum (ER). The functional states of the translocon complex include co- and post-translational ER import, cotranslational membrane protein integration and retrograde transport of misfolded proteins out of the ER. In the cotranslational pathway, ribosomes synthesizing presecretory proteins are targeted to the translocon by the cytosolic signal recognition particle (SRP) and its ER-localized receptor. The association of the Sec61 complex with the ribosome is mediated by the 28S rRNA of the large ribosomal subunit. SRP-independent post-translational translocation requires the association of additional factors, such as the Sec62/63 complex and KAR2. The chain is Protein transport protein SBH1 (SBH1) from Saccharomyces cerevisiae (strain ATCC 204508 / S288c) (Baker's yeast).